Reading from the N-terminus, the 89-residue chain is C-C motif chemokine 18 (89 aa).

An N-terminal signal peptide occupies residues 1-20; sequence MKGLAAALLVLVCTMALCSC. Intrachain disulfides connect Cys30–Cys54 and Cys31–Cys70.

The protein belongs to the intercrine beta (chemokine CC) family. The Cys-30/Cys-54 disulfide bond is required for activity. Expressed at high levels in lung, lymph nodes, placenta, bone marrow, dendritic cells present in germinal centers and T-cell areas of secondary lymphoid organs and macrophages derived from peripheral blood monocytes. Not expressed by peripheral blood monocytes and a monocyte-to-macrophage differentiation is a prerequisite for expression. Expressed in synovial fluids from patients with rheumatoid and septic arthritis and in ovarian carcinoma ascitic fluid.

Its subcellular location is the secreted. In terms of biological role, chemotactic factor that attracts lymphocytes but not monocytes or granulocytes. May be involved in B-cell migration into B-cell follicles in lymph nodes. Attracts naive T-lymphocytes toward dendritic cells and activated macrophages in lymph nodes, has chemotactic activity for naive T-cells, CD4+ and CD8+ T-cells and thus may play a role in both humoral and cell-mediated immunity responses. This Homo sapiens (Human) protein is C-C motif chemokine 18 (CCL18).